Reading from the N-terminus, the 530-residue chain is Phosphoenolpyruvate carboxykinase (ATP) (530 aa).

The substrate site is built by R58, Y195, and K201. Residues K201, H220, and 236-244 (GLSGTGKTT) each bind ATP. Mn(2+) contacts are provided by K201 and H220. A Mn(2+)-binding site is contributed by D257. Residues E285, R321, 440–441 (RI), and T446 contribute to the ATP site. R321 is a binding site for substrate.

This sequence belongs to the phosphoenolpyruvate carboxykinase (ATP) family. It depends on Mn(2+) as a cofactor.

The protein resides in the cytoplasm. The enzyme catalyses oxaloacetate + ATP = phosphoenolpyruvate + ADP + CO2. Its pathway is carbohydrate biosynthesis; gluconeogenesis. Its function is as follows. Involved in the gluconeogenesis. Catalyzes the conversion of oxaloacetate (OAA) to phosphoenolpyruvate (PEP) through direct phosphoryl transfer between the nucleoside triphosphate and OAA. This chain is Phosphoenolpyruvate carboxykinase (ATP), found in Staphylococcus aureus (strain MRSA252).